The chain runs to 108 residues: UPF0060 membrane protein Spro_2289 (108 aa).

A run of 4 helical transmembrane segments spans residues 6 to 26 (LLFF…YLWL), 31 to 51 (SAWL…LLTL), 61 to 81 (AAYG…VDGV), and 85 to 105 (ALDW…VSGW).

Belongs to the UPF0060 family.

Its subcellular location is the cell inner membrane. The protein is UPF0060 membrane protein Spro_2289 of Serratia proteamaculans (strain 568).